The primary structure comprises 192 residues: dCTP deaminase, dUMP-forming (192 aa).

Residues 101–106 (KSSLGR), D119, 127–129 (TLE), Q148, Y162, and Q174 contribute to the dCTP site. Residue E129 is the Proton donor/acceptor of the active site. Positions 165–184 (GAYGNRYQGQRGPTASRSHL) are disordered. Over residues 171-183 (YQGQRGPTASRSH) the composition is skewed to polar residues.

The protein belongs to the dCTP deaminase family. As to quaternary structure, homotrimer.

It catalyses the reaction dCTP + 2 H2O = dUMP + NH4(+) + diphosphate. Its pathway is pyrimidine metabolism; dUMP biosynthesis; dUMP from dCTP: step 1/1. Functionally, bifunctional enzyme that catalyzes both the deamination of dCTP to dUTP and the hydrolysis of dUTP to dUMP without releasing the toxic dUTP intermediate. In Kocuria rhizophila (strain ATCC 9341 / DSM 348 / NBRC 103217 / DC2201), this protein is dCTP deaminase, dUMP-forming.